The chain runs to 327 residues: MRKFLKYQLDVPSINSEDKNRTVVKIAPLEIGFGDTLGNALRRICLSSIPGASMFAVKFGGYSHEFQPYEGVKEDITHIILNLKNLAIKIDELIYSEDYFNNLLIDKWPKMKINFKGPGVITAKDIVCPVGFEIVNQDLYIAEVTKPIDVEIEIFAKTGRGRVDFNTNKDFVSTLHIIATDSNYSPVLHYAYNVEMIKDSKSSMSEILTIDIATNGTISGSEAIAIAAKIMQAHLEPIVNIDKTINEMIIMREREEEEKRQNASISIDDLDLTVRAYNALKQSGINTTAELIELTKSQLEKIKNLGRKSVTEIIQKLTERSLELKKD.

Positions 1–242 are alpha N-terminal domain (alpha-NTD); that stretch reads MRKFLKYQLD…AHLEPIVNID (242 aa). An alpha C-terminal domain (alpha-CTD) region spans residues 259 to 327; that stretch reads KRQNASISID…TERSLELKKD (69 aa).

It belongs to the RNA polymerase alpha chain family. As to quaternary structure, homodimer. The RNAP catalytic core consists of 2 alpha, 1 beta, 1 beta' and 1 omega subunit. When a sigma factor is associated with the core the holoenzyme is formed, which can initiate transcription.

The catalysed reaction is RNA(n) + a ribonucleoside 5'-triphosphate = RNA(n+1) + diphosphate. Its function is as follows. DNA-dependent RNA polymerase catalyzes the transcription of DNA into RNA using the four ribonucleoside triphosphates as substrates. This Ureaplasma parvum serovar 3 (strain ATCC 700970) protein is DNA-directed RNA polymerase subunit alpha.